Here is a 165-residue protein sequence, read N- to C-terminus: Phosphopantetheine adenylyltransferase (165 aa).

T9 is a binding site for substrate. Residues 9 to 10 (TF) and H17 each bind ATP. Substrate contacts are provided by K41, L73, and R87. ATP-binding positions include 88 to 90 (GLR), E98, and 123 to 129 (YQFISGT).

The protein belongs to the bacterial CoaD family. As to quaternary structure, homohexamer. Requires Mg(2+) as cofactor.

The protein resides in the cytoplasm. It catalyses the reaction (R)-4'-phosphopantetheine + ATP + H(+) = 3'-dephospho-CoA + diphosphate. It functions in the pathway cofactor biosynthesis; coenzyme A biosynthesis; CoA from (R)-pantothenate: step 4/5. Functionally, reversibly transfers an adenylyl group from ATP to 4'-phosphopantetheine, yielding dephospho-CoA (dPCoA) and pyrophosphate. The polypeptide is Phosphopantetheine adenylyltransferase (Burkholderia lata (strain ATCC 17760 / DSM 23089 / LMG 22485 / NCIMB 9086 / R18194 / 383)).